The sequence spans 537 residues: Glucose-6-phosphate isomerase (537 aa).

Residue glutamate 341 is the Proton donor of the active site. Catalysis depends on residues histidine 372 and lysine 501.

This sequence belongs to the GPI family.

Its subcellular location is the cytoplasm. It carries out the reaction alpha-D-glucose 6-phosphate = beta-D-fructose 6-phosphate. The protein operates within carbohydrate biosynthesis; gluconeogenesis. It participates in carbohydrate degradation; glycolysis; D-glyceraldehyde 3-phosphate and glycerone phosphate from D-glucose: step 2/4. In terms of biological role, catalyzes the reversible isomerization of glucose-6-phosphate to fructose-6-phosphate. This is Glucose-6-phosphate isomerase from Jannaschia sp. (strain CCS1).